The chain runs to 109 residues: Protein ELF4-LIKE 3 (109 aa).

Positions 88 to 109 are disordered; the sequence is SMEASSEGDSSEGRGNRRIRPA.

Belongs to the EARLY FLOWERING 4 family. Homodimer.

The protein resides in the nucleus. Its function is as follows. Component of the central CCA1/LHY-TOC1 feedback loop in the circadian clock that promotes clock accuracy and is required for sustained rhythms in the absence of daily light/dark cycles. This is Protein ELF4-LIKE 3 (EFL3) from Arabidopsis thaliana (Mouse-ear cress).